The primary structure comprises 398 residues: Argininosuccinate synthase (398 aa).

Residues 9–17 and A37 contribute to the ATP site; that span reads AYSGGVDTS. Residue Y88 participates in L-citrulline binding. G118 serves as a coordination point for ATP. The L-aspartate site is built by T120, N124, and D125. N124 provides a ligand contact to L-citrulline. Residues R128, S176, S185, E261, and Y273 each coordinate L-citrulline.

This sequence belongs to the argininosuccinate synthase family. Type 1 subfamily. In terms of assembly, homotetramer.

It localises to the cytoplasm. The enzyme catalyses L-citrulline + L-aspartate + ATP = 2-(N(omega)-L-arginino)succinate + AMP + diphosphate + H(+). Its pathway is amino-acid biosynthesis; L-arginine biosynthesis; L-arginine from L-ornithine and carbamoyl phosphate: step 2/3. The chain is Argininosuccinate synthase from Gloeobacter violaceus (strain ATCC 29082 / PCC 7421).